An 836-amino-acid chain; its full sequence is uncharacterized protein (836 aa).

3 disordered regions span residues 1 to 25 (MDST…NEEE), 692 to 718 (DSRS…NNQR), and 789 to 836 (ESSG…GYAS). 2 stretches are compositionally biased toward polar residues: residues 789 to 799 (ESSGINVSNTR) and 825 to 836 (IDSSSAQNGYAS).

The protein resides in the nucleus. This is an uncharacterized protein from Schizosaccharomyces pombe (strain 972 / ATCC 24843) (Fission yeast).